The chain runs to 827 residues: MTFCYPCRAFALLTRGFTSFMSGWPRIYYKLLNLPLSILVKSKSIPADPAPELGLDTSRPIMYVLPYNSKADLLTLRAQCLAHDLPDPLEPLEIDGTLLPRYVFIHGGPRVFTYYTPKEESIKLFHDYLDLHRSNPNLDVQMVPVSVMFGRAPGREKGEVNPPLRMLNGVQKFFAVLWLGRDSFVRFSPSVSLRRMADEHGTDKTIAQKLARVARMHFARQRLAAVGPRLPARQDLFNKLLASRAIAKAVEDEARSKKISHEKAQQNAIALMEEIAANFSYEMIRLTDRILGFTWNRLYQGINVHNAERVRQLAHDGHELVYVPCHRSHMDYLLLSYVLYHQGLVPPHIAAGINLNFWPAGPIFRRLGAFFIRRTFKGNKLYSTVFREYLGELFSRGYSVEYFVEGGRSRTGRLLDPKTGTLSMTIQAMLRGGTRPITLIPIYIGYEHVMEVGTYAKELRGATKEKESLPQMLRGLSKLRNLGQGYVNFGEPMPLMTYLNQHVPDWRESIDPIEAVRPAWLTPTVNNIAADLMVRINNAGAANAMNLCCTALLASRQRSLTREQLTEQLNCYLDLMRNVPYSTDSTVPSASASELIDHALQMNKFEVEKDTIGDIIILPREQAVLMTYYRNNIAHMLVLPSLMAAIVTQHRHISRDVLMEHVNVLYPMLKAELFLRWDRDELPDVIDALANEMQRQGLITLQDDELHINPSHSRTLQLLAAGARETLQRYAITFWLLSANPSINRGTLEKESRTVAQRLSVLHGINAPEFFDKAVFSSLVLTLRDEGYISDSGDAEPAETMKVYQLLAELITSDVRLTIESATQGEG.

Positions Cys325–Met330 match the HXXXXD motif motif.

Belongs to the GPAT/DAPAT family.

It is found in the cell inner membrane. It carries out the reaction sn-glycerol 3-phosphate + an acyl-CoA = a 1-acyl-sn-glycero-3-phosphate + CoA. Its pathway is phospholipid metabolism; CDP-diacylglycerol biosynthesis; CDP-diacylglycerol from sn-glycerol 3-phosphate: step 1/3. The protein is Glycerol-3-phosphate acyltransferase of Shigella boydii serotype 4 (strain Sb227).